Consider the following 443-residue polypeptide: Nuclear distribution protein nudF (443 aa).

Positions 9 to 41 (QAEELHKSIIAYLSSINASRSCEVLREELQVDS) constitute a LisH domain. Residues 60–87 (TGIARLQKKILDLESKLAGLQTELDTIS) adopt a coiled-coil conformation. WD repeat units follow at residues 111 to 152 (SHRD…RTLK), 154 to 194 (HMRP…ANVR), 198 to 238 (GHDH…CVKV), 241 to 280 (SQGS…SVAS), 283 to 343 (GHEN…IKTL), 345 to 384 (GHDN…RLVK), 388 to 427 (AHGH…PGFQ), and 429 to 443 (VIAT…RIFT).

It belongs to the WD repeat LIS1/nudF family. As to quaternary structure, self-associates. Interacts with nudE and dynein.

The protein localises to the cytoplasm. The protein resides in the cytoskeleton. It is found in the spindle pole. Positively regulates the activity of the minus-end directed microtubule motor protein dynein. May enhance dynein-mediated microtubule sliding by targeting dynein to the microtubule plus end. Required for nuclear migration during vegetative growth as well as development. Required for retrograde early endosome (EE) transport from the hyphal tip. Required for localization of dynein to the mitotic spindle poles. Recruits additional proteins to the dynein complex at SPBs. The chain is Nuclear distribution protein nudF from Aspergillus niger (strain ATCC MYA-4892 / CBS 513.88 / FGSC A1513).